The sequence spans 371 residues: MDFQLQATDNNARAGLLNLAHSQVATPVFMPVGTQGCIKSLDATDMQGILGAKLILANTYHLYLRPGEKVVEELGGLHRFAQFHGSFLTDSGGFQAFSLSDNVKLQEDGIVFKSHIDGSKHLFTPAKVLDIQYSLNSDIMMVLDDLVGLPAPLKRLEESIKRSAKWANLSLEYHKQKNRPNNNLFAIIQGGTHLKMRSLSVGLTHEGFDGYAIGGLAVGESADEMLETIAHTAPLLPKDKPRYLMGVGTPENILDAIGLGVDMFDCVMPTRNARNATLFTHSGKISIKNAPYKLDDTPIEENCACYTCKRYSKAYLHHLFRAKELTYARLASLHNLHFYLELVKNARNAILEKRFLSFKKEFLKKYHSRSH.

Residue D90 is the Proton acceptor of the active site. Substrate-binding positions include 90 to 94, D144, Q189, and G215; that span reads DSGGF. Residues 246 to 252 form an RNA binding region; that stretch reads GVGTPEN. The Nucleophile role is filled by D265. An RNA binding; important for wobble base 34 recognition region spans residues 270–274; sequence TRNAR. Zn(2+) contacts are provided by C303, C305, C308, and H334.

This sequence belongs to the queuine tRNA-ribosyltransferase family. In terms of assembly, homodimer. Within each dimer, one monomer is responsible for RNA recognition and catalysis, while the other monomer binds to the replacement base PreQ1. Zn(2+) serves as cofactor.

The enzyme catalyses 7-aminomethyl-7-carbaguanine + guanosine(34) in tRNA = 7-aminomethyl-7-carbaguanosine(34) in tRNA + guanine. It functions in the pathway tRNA modification; tRNA-queuosine biosynthesis. In terms of biological role, catalyzes the base-exchange of a guanine (G) residue with the queuine precursor 7-aminomethyl-7-deazaguanine (PreQ1) at position 34 (anticodon wobble position) in tRNAs with GU(N) anticodons (tRNA-Asp, -Asn, -His and -Tyr). Catalysis occurs through a double-displacement mechanism. The nucleophile active site attacks the C1' of nucleotide 34 to detach the guanine base from the RNA, forming a covalent enzyme-RNA intermediate. The proton acceptor active site deprotonates the incoming PreQ1, allowing a nucleophilic attack on the C1' of the ribose to form the product. After dissociation, two additional enzymatic reactions on the tRNA convert PreQ1 to queuine (Q), resulting in the hypermodified nucleoside queuosine (7-(((4,5-cis-dihydroxy-2-cyclopenten-1-yl)amino)methyl)-7-deazaguanosine). The polypeptide is Queuine tRNA-ribosyltransferase (Helicobacter pylori (strain Shi470)).